The primary structure comprises 183 residues: Ras-related protein Rap-2c (183 aa).

A GTP-binding site is contributed by 10-17 (GSGGVGKS). The Effector region motif lies at 32 to 40 (YDPTIEDFY). GTP contacts are provided by residues 57–61 (DTAGT) and 116–119 (NKVD). Residues cysteine 176 and cysteine 177 are each lipidated (S-palmitoyl cysteine). The residue at position 180 (cysteine 180) is a Cysteine methyl ester. Cysteine 180 carries the S-geranylgeranyl cysteine lipid modification. Residues 181–183 (VVQ) constitute a propeptide, removed in mature form.

Belongs to the small GTPase superfamily. Ras family. Post-translationally, palmitoylated. Palmitoylation is required for association with recycling endosome membranes and activation of TNIK.

Its subcellular location is the cytoplasm. It is found in the recycling endosome membrane. The enzyme catalyses GTP + H2O = GDP + phosphate + H(+). Its function is as follows. Small GTP-binding protein which cycles between a GDP-bound inactive and a GTP-bound active form. May play a role in cytoskeletal rearrangements and regulate cell spreading through activation of the effector TNIK. May play a role in SRE-mediated gene transcription. This is Ras-related protein Rap-2c (RAP2C) from Bos taurus (Bovine).